The following is a 1551-amino-acid chain: UDP-glucose:glycoprotein glucosyltransferase 1 (1551 aa).

Positions 1–42 are cleaved as a signal peptide; the sequence is MCSRGDANAAGAAAARRVTGLCYNMGLLIALALLCLFSLAEA. N-linked (GlcNAc...) asparagine glycans are attached at residues N269, N536, N1015, and N1228. Positions 1244-1551 are glucosyltransferase; the sequence is KTEEVKQDKD…QEGSQKHEEL (308 aa). S1277 carries the phosphoserine modification. Positions 1531–1551 are disordered; it reads KELGTLHEEETQEGSQKHEEL. A Prevents secretion from ER motif is present at residues 1548–1551; sequence HEEL.

It belongs to the glycosyltransferase 8 family. In terms of assembly, monomer as well as in a tight complex with SELENOF. Interacts with METTL23. Part of a large chaperone multiprotein complex comprising DNAJB11, HSP90B1, HSPA5, HYOU, PDIA2, PDIA4, PDIA6, PPIB, SDF2L1, UGGT1 and very small amounts of ERP29, but not, or at very low levels, CALR nor CANX. It depends on Ca(2+) as a cofactor.

The protein localises to the endoplasmic reticulum lumen. Its subcellular location is the endoplasmic reticulum-Golgi intermediate compartment. The enzyme catalyses N(4)-(alpha-D-Man-(1-&gt;2)-alpha-D-Man-(1-&gt;2)-alpha-D-Man-(1-&gt;3)-[alpha-D-Man-(1-&gt;2)-alpha-D-Man-(1-&gt;3)-[alpha-D-Man-(1-&gt;2)-alpha-D-Man-(1-&gt;6)]-alpha-D-Man-(1-&gt;6)]-beta-D-Man-(1-&gt;4)-beta-D-GlcNAc-(1-&gt;4)-beta-D-GlcNAc)-L-asparaginyl-[protein] (N-glucan mannose isomer 9A1,2,3B1,2,3) + UDP-alpha-D-glucose = N(4)-(alpha-D-Glc-(1-&gt;3)-alpha-D-Man-(1-&gt;2)-alpha-D-Man-(1-&gt;2)-alpha-D-Man-(1-&gt;3)-[alpha-D-Man-(1-&gt;2)-alpha-D-Man-(1-&gt;3)-[alpha-D-Man-(1-&gt;2)-alpha-D-Man-(1-&gt;6)]-alpha-D-Man-(1-&gt;6)]-beta-D-Man-(1-&gt;4)-beta-D-GlcNAc-(1-&gt;4)-beta-D-GlcNAc)-L-asparaginyl-[protein] + UDP + H(+). Its pathway is protein modification; protein glycosylation. Its function is as follows. Recognizes glycoproteins with minor folding defects. Reglucosylates single N-glycans near the misfolded part of the protein, thus providing quality control for protein folding in the endoplasmic reticulum. Reglucosylated proteins are recognized by calreticulin for recycling to the endoplasmic reticulum and refolding or degradation. The protein is UDP-glucose:glycoprotein glucosyltransferase 1 (Uggt1) of Rattus norvegicus (Rat).